The following is a 67-amino-acid chain: UPF0434 protein Bphy_0537 (67 aa).

This sequence belongs to the UPF0434 family.

The polypeptide is UPF0434 protein Bphy_0537 (Paraburkholderia phymatum (strain DSM 17167 / CIP 108236 / LMG 21445 / STM815) (Burkholderia phymatum)).